A 24-amino-acid chain; its full sequence is Brevinin-1R (24 aa).

A disulfide bond links Cys18 and Cys24.

As to expression, expressed by the skin glands.

The protein localises to the secreted. In terms of biological role, antimicrobial peptide. This is Brevinin-1R from Pelophylax ridibundus (Marsh frog).